Consider the following 146-residue polypeptide: BCL7-like protein (146 aa).

A disordered region spans residues 59–146 (MAPPKIKEVK…RDAEMTSKQP (88 aa)). Composition is skewed to polar residues over residues 75 to 90 (NQVP…TSVT) and 113 to 134 (DSNQ…TDFS). Residues 135 to 146 (SMRDAEMTSKQP) show a composition bias toward basic and acidic residues.

It belongs to the BCL7 family. Ubiquitous.

The protein resides in the nucleus. Functionally, required for the terminal differentiation of seam cells, and the differentiation of distal tip cells important for normal somatic gonad and germ cell development. Plays a role in the Wnt signaling pathway, regulating the expression of beta-catenin homologs wrm-1, bar-1 and sys-1, and the localization of wrm-1 and the wnt signaling pathway component pop-1 during asymmetric cell division of seam cells and the Z-cell lineage of the somatic gonad, respectively. May have a pro-apoptotic role, possibly linked to the negative regulation of expression of anti-apoptotic factor ced-9. The protein is BCL7-like protein of Caenorhabditis elegans.